The sequence spans 228 residues: 7-cyano-7-deazaguanine synthase (228 aa).

Residue 8-18 (LSGGLDSTTCL) coordinates ATP. Zn(2+) contacts are provided by cysteine 188, cysteine 198, cysteine 201, and cysteine 204.

This sequence belongs to the QueC family. The cofactor is Zn(2+).

The enzyme catalyses 7-carboxy-7-deazaguanine + NH4(+) + ATP = 7-cyano-7-deazaguanine + ADP + phosphate + H2O + H(+). The protein operates within purine metabolism; 7-cyano-7-deazaguanine biosynthesis. In terms of biological role, catalyzes the ATP-dependent conversion of 7-carboxy-7-deazaguanine (CDG) to 7-cyano-7-deazaguanine (preQ(0)). In Legionella pneumophila subsp. pneumophila (strain Philadelphia 1 / ATCC 33152 / DSM 7513), this protein is 7-cyano-7-deazaguanine synthase.